Consider the following 395-residue polypeptide: 8-amino-7-oxononanoate synthase/2-amino-3-ketobutyrate coenzyme A ligase (395 aa).

110–111 provides a ligand contact to pyridoxal 5'-phosphate; it reads GF. Residue histidine 135 coordinates substrate. Pyridoxal 5'-phosphate-binding positions include serine 182, 207–210, and 239–242; these read DDAH and TLSK. Position 242 is an N6-(pyridoxal phosphate)lysine (lysine 242). Threonine 356 serves as a coordination point for substrate.

The protein belongs to the class-II pyridoxal-phosphate-dependent aminotransferase family. Homodimer. Pyridoxal 5'-phosphate serves as cofactor.

It catalyses the reaction 6-carboxyhexanoyl-[ACP] + L-alanine + H(+) = (8S)-8-amino-7-oxononanoate + holo-[ACP] + CO2. It carries out the reaction glycine + acetyl-CoA = (2S)-2-amino-3-oxobutanoate + CoA. Its pathway is cofactor biosynthesis; biotin biosynthesis. Functionally, catalyzes the decarboxylative condensation of pimeloyl-[acyl-carrier protein] and L-alanine to produce 8-amino-7-oxononanoate (AON), [acyl-carrier protein], and carbon dioxide. Can also use pimeloyl-CoA instead of pimeloyl-ACP as substrate. It also converts 2-amino-3-ketobutyrate and CoA to glycine and acetyl-CoA. Activity is also observed with the following combinations of substrates: acetyl-CoA and either L-alanine or L-serine, pimeloyl-CoA and either glycine or L-serine, and palmitoyl-CoA with L-alanine. In Thermus thermophilus (strain ATCC 27634 / DSM 579 / HB8), this protein is 8-amino-7-oxononanoate synthase/2-amino-3-ketobutyrate coenzyme A ligase.